The following is an 840-amino-acid chain: Homeobox-leucine zipper protein HOX9 (840 aa).

2 disordered regions span residues methionine 1–aspartate 26 and asparagine 135–asparagine 160. Residues glycine 12–aspartate 21 show a composition bias toward gly residues. A DNA-binding region (homeobox) is located at residues aspartate 26–lysine 89. The stretch at lysine 86–asparagine 135 forms a coiled coil. The START domain maps to aspartate 157–valine 385.

It belongs to the HD-ZIP homeobox family. Class III subfamily. As to expression, expressed in seedlings, roots, stems, leaf sheaths and blades and panicles.

It is found in the nucleus. In terms of biological role, probable transcription factor. The polypeptide is Homeobox-leucine zipper protein HOX9 (HOX9) (Oryza sativa subsp. japonica (Rice)).